A 160-amino-acid polypeptide reads, in one-letter code: Cyanate hydratase (160 aa).

Residues Arg100, Glu103, and Ser126 contribute to the active site.

This sequence belongs to the cyanase family.

It catalyses the reaction cyanate + hydrogencarbonate + 3 H(+) = NH4(+) + 2 CO2. In terms of biological role, catalyzes the reaction of cyanate with bicarbonate to produce ammonia and carbon dioxide. The protein is Cyanate hydratase of Penicillium rubens (strain ATCC 28089 / DSM 1075 / NRRL 1951 / Wisconsin 54-1255) (Penicillium chrysogenum).